A 147-amino-acid chain; its full sequence is MSFPESTQLLLKAKKEKGLTFADIGILLGLDEVWVASLFYGQSTASDEEADKLLTTLGLGAELKEILTTPPVKGSLDPVIPTDPLIYRFYEIMQVYGMPMKDVIQEKFGDGIMSAIDFTINVDKVEDPKGDRVKVAMCGKFLPYKKW.

Active-site residues include R88, E91, and S114.

It belongs to the cyanase family.

The catalysed reaction is cyanate + hydrogencarbonate + 3 H(+) = NH4(+) + 2 CO2. In terms of biological role, catalyzes the reaction of cyanate with bicarbonate to produce ammonia and carbon dioxide. The sequence is that of Cyanate hydratase from Prochlorococcus marinus (strain NATL2A).